The primary structure comprises 415 residues: Protrudin (415 aa).

Residues 1–24 (MQTSDRDLSGPEASPSGMPEVLSE) are disordered. The Cytoplasmic portion of the chain corresponds to 1–66 (MQTSDRDLSG…AGDGVRYLLR (66 aa)). The segment at 1 to 92 (MQTSDRDLSG…LFLTLNEGAW (92 aa)) is sufficient for homooligomerization. The interval 1-210 (MQTSDRDLSG…LYLLPLCWVL (210 aa)) is sufficient for localization to endoplasmic reticulum tubular network and for interactions with REEP1, REEP5, ATL1, ATL2, ATL3 and SPAST. The interval 51 to 64 (LEPLKDAGDGVRYL) is necessary for interaction with RAB11A and function in neurite outgrowth. A helical transmembrane segment spans residues 67–87 (WQMPLCSLLTCLGLNILFLTL). Position 88 (asparagine 88) is a topological domain, lumenal. A helical membrane pass occupies residues 89 to 109 (EGAWYSMGALMISVPALLGYL). The Cytoplasmic segment spans residues 110–192 (QEVCRGQLPE…NPVVSSQFYG (83 aa)). The segment at residues 193–213 (ALLGMVCMLYLLPLCWVLALL) is an intramembrane region (helical). Residues 214 to 415 (NSTLFLGNGD…CASCNQTLSK (202 aa)) are Cytoplasmic-facing. The disordered stretch occupies residues 254–290 (QGAGGRGLLDSSPAPTPTEDLTPGSVEEAEEAEPDEE). The segment at 275–365 (TPGSVEEAEE…GCAATFSVLK (91 aa)) is necessary for interaction with KIF5A. The segment covering 280–290 (EEAEEAEPDEE) has biased composition (acidic residues). Residues 290-296 (EFKDAIE) are necessary for interaction with VAPA. The segment at 348–414 (TNNFGNCAGC…VCASCNQTLS (67 aa)) adopts an FYVE-type zinc-finger fold. Zn(2+)-binding residues include cysteine 354, cysteine 357, cysteine 370, cysteine 373, cysteine 378, cysteine 381, cysteine 406, and cysteine 409.

In terms of assembly, can form homooligomers (monomers, dimers and tetramers). Interacts with RAB11A (GDP-bound form); regulates RAB11A. Interacts with FKBP8; may negatively regulate ZFYVE27 phosphorylation. Isoform 1 interacts to a greater extent than isoform 2 with VAPB (via MSP domain). Isoform 1 interacts to a greater extent than isoform 2 with VAPA (via MSP domain). Interaction with VAPA may regulate ZFYVE27 retention in the endoplasmic reticulum and its function in cell projections formation. Interacts with ATL2, ATL3, SPAST and RTN3. Interacts with REEP1, REEP5 and ATL1. Interacts with RAB11B (GDP-bound form), SURF4, KIF5B and KIF5C. Isoform 1 and 2 interact with KIFA. Post-translationally, phosphorylated. Phosphorylation is induced by NGF through the MAPK/ERK pathway and modulates interaction with RAB11A. Astrocytes express both isoform 1 and isoform 2 and oligodendrocytes express only isoform 2 (at protein level). Isoform 1 is expressed specifically in the central nervous system and selectively in neuronal cells. Isoform 2 is expressed in cerebrum, cerebellum, spinal cord, heart, thymus, spleen, intestine and lung.

The protein localises to the recycling endosome membrane. The protein resides in the endoplasmic reticulum membrane. Its subcellular location is the cell projection. It is found in the growth cone membrane. Key regulator of RAB11-dependent vesicular trafficking during neurite extension through polarized membrane transport. Promotes axonal elongation and contributes to the establishment of neuronal cell polarity. Involved in nerve growth factor-induced neurite formation in VAPA-dependent manner. Contributes to both the formation and stabilization of the tubular ER network. Involved in ER morphogenesis by regulating the sheet-to-tubule balance and possibly the density of tubule interconnections. Acts as an adapter protein that facilitates the interaction of KIF5A with VAPA, VAPB, SURF4, RAB11A, RAB11B and RTN3 and the ZFYVE27-KIF5A complex contributes to the transport of these proteins in neurons. Can induce formation of neurite-like membrane protrusions in non-neuronal cells in a KIF5A/B-dependent manner. The chain is Protrudin (Zfyve27) from Mus musculus (Mouse).